Reading from the N-terminus, the 214-residue chain is LexA repressor (214 aa).

Positions 26-46 form a DNA-binding region, H-T-H motif; it reads VREIGEAVGLSSSSTVHSYLK. Catalysis depends on for autocatalytic cleavage activity residues S138 and K175.

The protein belongs to the peptidase S24 family. In terms of assembly, homodimer.

It carries out the reaction Hydrolysis of Ala-|-Gly bond in repressor LexA.. In terms of biological role, represses a number of genes involved in the response to DNA damage (SOS response), including recA and lexA. In the presence of single-stranded DNA, RecA interacts with LexA causing an autocatalytic cleavage which disrupts the DNA-binding part of LexA, leading to derepression of the SOS regulon and eventually DNA repair. This chain is LexA repressor, found in Desulforamulus reducens (strain ATCC BAA-1160 / DSM 100696 / MI-1) (Desulfotomaculum reducens).